Here is an 82-residue protein sequence, read N- to C-terminus: MSKPANNLQDIFLNGARKNRIPVIVYLTNGFQIRGIVKGFDNFTVILECDGKQMMVYKHALSTITPSKAILFNTPAGTDDRS.

The Sm domain maps to D10–I70.

It belongs to the Hfq family. Homohexamer.

In terms of biological role, RNA chaperone that binds small regulatory RNA (sRNAs) and mRNAs to facilitate mRNA translational regulation in response to envelope stress, environmental stress and changes in metabolite concentrations. Also binds with high specificity to tRNAs. This chain is RNA-binding protein Hfq, found in Clostridium kluyveri (strain NBRC 12016).